Reading from the N-terminus, the 253-residue chain is MYILVTNDDGYQSPGLAALRAVLSEIGEVAVVAPDRNWSAAGHYRKLFDPLRAWEGTLSDGSPALICDGTPADCVALAILGLLDRKPDLVVSGINLGANLGTDLLYSGTVAAAMEGIVFGVPGLAVSQIRPKDGQWDFRAAQVAVRRLVMLIRERGLPPELLLNLNIPAVTPETLRGIKVSRLGRRVYRDELVVRYDPRGRPYYWIDGAEPEDHCEEGTDIAAISEGYASLTPVQMDLTSHRWLEELRRWEWE.

Residues Asp-8, Asp-9, Ser-39, and Asn-95 each coordinate a divalent metal cation.

This sequence belongs to the SurE nucleotidase family. It depends on a divalent metal cation as a cofactor.

The protein localises to the cytoplasm. It carries out the reaction a ribonucleoside 5'-phosphate + H2O = a ribonucleoside + phosphate. Nucleotidase that shows phosphatase activity on nucleoside 5'-monophosphates. This chain is 5'-nucleotidase SurE, found in Chloroflexus aggregans (strain MD-66 / DSM 9485).